The following is a 175-amino-acid chain: Sec-independent protein translocase protein TatB (175 aa).

The chain crosses the membrane as a helical span at residues 1–21 (MFDIGWSELVLIGVVALIAIG). Disordered stretches follow at residues 100-132 (KPAE…PTPE) and 155-175 (QAPV…AKAS). Residues 111–132 (EAPATSSEALTTPTTPEAPTPE) show a composition bias toward low complexity.

Belongs to the TatB family. The Tat system comprises two distinct complexes: a TatABC complex, containing multiple copies of TatA, TatB and TatC subunits, and a separate TatA complex, containing only TatA subunits. Substrates initially bind to the TatABC complex, which probably triggers association of the separate TatA complex to form the active translocon.

It is found in the cell inner membrane. Part of the twin-arginine translocation (Tat) system that transports large folded proteins containing a characteristic twin-arginine motif in their signal peptide across membranes. Together with TatC, TatB is part of a receptor directly interacting with Tat signal peptides. TatB may form an oligomeric binding site that transiently accommodates folded Tat precursor proteins before their translocation. This chain is Sec-independent protein translocase protein TatB, found in Bradyrhizobium diazoefficiens (strain JCM 10833 / BCRC 13528 / IAM 13628 / NBRC 14792 / USDA 110).